We begin with the raw amino-acid sequence, 377 residues long: N-acetyldiaminopimelate deacetylase (377 aa).

The active site involves aspartate 70. The active-site Proton acceptor is glutamate 129.

It belongs to the peptidase M20A family. N-acetyldiaminopimelate deacetylase subfamily.

It carries out the reaction N-acetyl-(2S,6S)-2,6-diaminopimelate + H2O = (2S,6S)-2,6-diaminopimelate + acetate. It functions in the pathway amino-acid biosynthesis; L-lysine biosynthesis via DAP pathway; LL-2,6-diaminopimelate from (S)-tetrahydrodipicolinate (acetylase route): step 3/3. In terms of biological role, catalyzes the conversion of N-acetyl-diaminopimelate to diaminopimelate and acetate. The polypeptide is N-acetyldiaminopimelate deacetylase (Geobacillus thermodenitrificans (strain NG80-2)).